The chain runs to 229 residues: Large ribosomal subunit protein uL1 (229 aa).

It belongs to the universal ribosomal protein uL1 family. As to quaternary structure, part of the 50S ribosomal subunit.

Its function is as follows. Binds directly to 23S rRNA. The L1 stalk is quite mobile in the ribosome, and is involved in E site tRNA release. Functionally, protein L1 is also a translational repressor protein, it controls the translation of the L11 operon by binding to its mRNA. In Magnetococcus marinus (strain ATCC BAA-1437 / JCM 17883 / MC-1), this protein is Large ribosomal subunit protein uL1.